We begin with the raw amino-acid sequence, 387 residues long: Formate-dependent phosphoribosylglycinamide formyltransferase (387 aa).

Residues 21–22 (EL) and Glu81 each bind N(1)-(5-phospho-beta-D-ribosyl)glycinamide. ATP-binding positions include Arg113, Lys154, 159-164 (SSGHGQ), 193-196 (EEFV), and Glu201. The region spanning 118–306 (VFAAETLDLK…EFALHVRAVL (189 aa)) is the ATP-grasp domain. Mg(2+) contacts are provided by Glu265 and Glu277. N(1)-(5-phospho-beta-D-ribosyl)glycinamide-binding positions include Asp284, Lys352, and 359 to 360 (RR).

It belongs to the PurK/PurT family. As to quaternary structure, homodimer.

It carries out the reaction N(1)-(5-phospho-beta-D-ribosyl)glycinamide + formate + ATP = N(2)-formyl-N(1)-(5-phospho-beta-D-ribosyl)glycinamide + ADP + phosphate + H(+). It functions in the pathway purine metabolism; IMP biosynthesis via de novo pathway; N(2)-formyl-N(1)-(5-phospho-D-ribosyl)glycinamide from N(1)-(5-phospho-D-ribosyl)glycinamide (formate route): step 1/1. Its function is as follows. Involved in the de novo purine biosynthesis. Catalyzes the transfer of formate to 5-phospho-ribosyl-glycinamide (GAR), producing 5-phospho-ribosyl-N-formylglycinamide (FGAR). Formate is provided by PurU via hydrolysis of 10-formyl-tetrahydrofolate. In Sulfurovum sp. (strain NBC37-1), this protein is Formate-dependent phosphoribosylglycinamide formyltransferase.